The chain runs to 406 residues: Coenzyme A biosynthesis bifunctional protein CoaBC (406 aa).

The segment at 2 to 190 (SLAGKKIVLG…SPVNDLKHLN (189 aa)) is phosphopantothenoylcysteine decarboxylase. The active-site Proton donor is Cys158. Positions 191 to 406 (IMITAGPTRE…VTRYDEKNRR (216 aa)) are phosphopantothenate--cysteine ligase. CTP is bound by residues 273 to 275 (GCA), Asp279, Lys289, 308 to 311 (PDIV), Phe327, Lys341, and Lys345.

It in the N-terminal section; belongs to the HFCD (homo-oligomeric flavin containing Cys decarboxylase) superfamily. The protein in the C-terminal section; belongs to the PPC synthetase family. Requires Mg(2+) as cofactor. FMN serves as cofactor.

The catalysed reaction is N-[(R)-4-phosphopantothenoyl]-L-cysteine + H(+) = (R)-4'-phosphopantetheine + CO2. The enzyme catalyses (R)-4'-phosphopantothenate + L-cysteine + CTP = N-[(R)-4-phosphopantothenoyl]-L-cysteine + CMP + diphosphate + H(+). Its pathway is cofactor biosynthesis; coenzyme A biosynthesis; CoA from (R)-pantothenate: step 2/5. It participates in cofactor biosynthesis; coenzyme A biosynthesis; CoA from (R)-pantothenate: step 3/5. Functionally, catalyzes two sequential steps in the biosynthesis of coenzyme A. In the first step cysteine is conjugated to 4'-phosphopantothenate to form 4-phosphopantothenoylcysteine. In the second step the latter compound is decarboxylated to form 4'-phosphopantotheine. The polypeptide is Coenzyme A biosynthesis bifunctional protein CoaBC (Escherichia coli O6:H1 (strain CFT073 / ATCC 700928 / UPEC)).